A 103-amino-acid polypeptide reads, in one-letter code: Large ribosomal subunit protein uL24 (103 aa).

The protein belongs to the universal ribosomal protein uL24 family. As to quaternary structure, part of the 50S ribosomal subunit.

One of two assembly initiator proteins, it binds directly to the 5'-end of the 23S rRNA, where it nucleates assembly of the 50S subunit. In terms of biological role, one of the proteins that surrounds the polypeptide exit tunnel on the outside of the subunit. This is Large ribosomal subunit protein uL24 from Anoxybacillus flavithermus (strain DSM 21510 / WK1).